Consider the following 238-residue polypeptide: Ribonuclease PH (238 aa).

Phosphate-binding positions include arginine 86 and 124 to 126 (GTR).

The protein belongs to the RNase PH family. In terms of assembly, homohexameric ring arranged as a trimer of dimers.

It carries out the reaction tRNA(n+1) + phosphate = tRNA(n) + a ribonucleoside 5'-diphosphate. In terms of biological role, phosphorolytic 3'-5' exoribonuclease that plays an important role in tRNA 3'-end maturation. Removes nucleotide residues following the 3'-CCA terminus of tRNAs; can also add nucleotides to the ends of RNA molecules by using nucleoside diphosphates as substrates, but this may not be physiologically important. Probably plays a role in initiation of 16S rRNA degradation (leading to ribosome degradation) during starvation. This chain is Ribonuclease PH, found in Rhizorhabdus wittichii (strain DSM 6014 / CCUG 31198 / JCM 15750 / NBRC 105917 / EY 4224 / RW1) (Sphingomonas wittichii).